A 117-amino-acid chain; its full sequence is Large ribosomal subunit protein bL20c (117 aa).

The protein belongs to the bacterial ribosomal protein bL20 family.

The protein localises to the plastid. It is found in the chloroplast. Functionally, binds directly to 23S ribosomal RNA and is necessary for the in vitro assembly process of the 50S ribosomal subunit. It is not involved in the protein synthesizing functions of that subunit. The protein is Large ribosomal subunit protein bL20c of Carica papaya (Papaya).